A 263-amino-acid polypeptide reads, in one-letter code: PDZ domain-containing protein 9 (263 aa).

Positions 30–109 (QTKLTVGSMG…GTILQIKVYR (80 aa)) constitute a PDZ domain.

The sequence is that of PDZ domain-containing protein 9 (PDZD9) from Bos taurus (Bovine).